The following is a 254-amino-acid chain: Ribonuclease HII (254 aa).

An RNase H type-2 domain is found at 67–254 (IVIAGVDEVG…HRMSFLKNII (188 aa)). A divalent metal cation-binding residues include Asp73, Glu74, and Asp170.

Belongs to the RNase HII family. Mn(2+) is required as a cofactor. Mg(2+) serves as cofactor.

It is found in the cytoplasm. The catalysed reaction is Endonucleolytic cleavage to 5'-phosphomonoester.. In terms of biological role, endonuclease that specifically degrades the RNA of RNA-DNA hybrids. This Clostridium acetobutylicum (strain ATCC 824 / DSM 792 / JCM 1419 / IAM 19013 / LMG 5710 / NBRC 13948 / NRRL B-527 / VKM B-1787 / 2291 / W) protein is Ribonuclease HII.